Here is a 127-residue protein sequence, read N- to C-terminus: Large ribosomal subunit protein bL17 (127 aa).

It belongs to the bacterial ribosomal protein bL17 family. As to quaternary structure, part of the 50S ribosomal subunit. Contacts protein L32.

In Xanthomonas oryzae pv. oryzae (strain KACC10331 / KXO85), this protein is Large ribosomal subunit protein bL17.